A 475-amino-acid chain; its full sequence is Aspartyl/glutamyl-tRNA(Asn/Gln) amidotransferase subunit B (475 aa).

This sequence belongs to the GatB/GatE family. GatB subfamily. As to quaternary structure, heterotrimer of A, B and C subunits.

The enzyme catalyses L-glutamyl-tRNA(Gln) + L-glutamine + ATP + H2O = L-glutaminyl-tRNA(Gln) + L-glutamate + ADP + phosphate + H(+). It catalyses the reaction L-aspartyl-tRNA(Asn) + L-glutamine + ATP + H2O = L-asparaginyl-tRNA(Asn) + L-glutamate + ADP + phosphate + 2 H(+). In terms of biological role, allows the formation of correctly charged Asn-tRNA(Asn) or Gln-tRNA(Gln) through the transamidation of misacylated Asp-tRNA(Asn) or Glu-tRNA(Gln) in organisms which lack either or both of asparaginyl-tRNA or glutaminyl-tRNA synthetases. The reaction takes place in the presence of glutamine and ATP through an activated phospho-Asp-tRNA(Asn) or phospho-Glu-tRNA(Gln). This chain is Aspartyl/glutamyl-tRNA(Asn/Gln) amidotransferase subunit B, found in Trichlorobacter lovleyi (strain ATCC BAA-1151 / DSM 17278 / SZ) (Geobacter lovleyi).